A 500-amino-acid polypeptide reads, in one-letter code: NAD(P)H-quinone oxidoreductase subunit 2, chloroplastic (500 aa).

13 helical membrane-spanning segments follow: residues 15 to 35 (ILPE…DLSL), 42 to 62 (WIIY…CLQW), 79 to 99 (FSIA…LLSI), 109 to 129 (LMEF…LCGA), 132 to 152 (LITI…LAGY), 167 to 187 (LLVG…LYGL), 201 to 221 (LIFA…CIIV), 247 to 267 (VVAF…IRII), 278 to 298 (WQFL…LVAI), 306 to 326 (MLAY…ISST), 334 to 354 (LVYM…VILF), 377 to 397 (ASCL…AGFF), and 400 to 420 (IYLF…VGLL).

This sequence belongs to the complex I subunit 2 family. As to quaternary structure, NDH is composed of at least 16 different subunits, 5 of which are encoded in the nucleus.

The protein resides in the plastid. It is found in the chloroplast thylakoid membrane. The catalysed reaction is a plastoquinone + NADH + (n+1) H(+)(in) = a plastoquinol + NAD(+) + n H(+)(out). The enzyme catalyses a plastoquinone + NADPH + (n+1) H(+)(in) = a plastoquinol + NADP(+) + n H(+)(out). Functionally, NDH shuttles electrons from NAD(P)H:plastoquinone, via FMN and iron-sulfur (Fe-S) centers, to quinones in the photosynthetic chain and possibly in a chloroplast respiratory chain. The immediate electron acceptor for the enzyme in this species is believed to be plastoquinone. Couples the redox reaction to proton translocation, and thus conserves the redox energy in a proton gradient. The sequence is that of NAD(P)H-quinone oxidoreductase subunit 2, chloroplastic from Chaetosphaeridium globosum (Charophycean green alga).